The following is a 182-amino-acid chain: Peptidyl-prolyl cis-trans isomerase H (182 aa).

Residues 15–181 (FFDITIGGEP…LDVVISQCGE (167 aa)) form the PPIase cyclophilin-type domain.

This sequence belongs to the cyclophilin-type PPIase family. PPIase H subfamily.

The protein localises to the nucleus. It catalyses the reaction [protein]-peptidylproline (omega=180) = [protein]-peptidylproline (omega=0). Its function is as follows. PPIases accelerate the folding of proteins. It catalyzes the cis-trans isomerization of proline imidic peptide bonds in oligopeptides. The protein is Peptidyl-prolyl cis-trans isomerase H (CYP3) of Gibberella zeae (strain ATCC MYA-4620 / CBS 123657 / FGSC 9075 / NRRL 31084 / PH-1) (Wheat head blight fungus).